Consider the following 295-residue polypeptide: Nucleotide-binding protein Lxx11490 (295 aa).

19–26 (GMSGAGRS) serves as a coordination point for ATP. 70 to 73 (DVRG) is a GTP binding site.

It belongs to the RapZ-like family.

In terms of biological role, displays ATPase and GTPase activities. The polypeptide is Nucleotide-binding protein Lxx11490 (Leifsonia xyli subsp. xyli (strain CTCB07)).